An 853-amino-acid chain; its full sequence is Putative dipeptidyl aminopeptidase C14C4.15c (853 aa).

The tract at residues 1–26 is disordered; sequence MNAYEGDTLNNHGKSSTRQHWRKRSA. At 1–65 the chain is on the cytoplasmic side; sequence MNAYEGDTLN…AKKRRRKKHR (65 aa). Residues 15–25 are compositionally biased toward basic residues; sequence SSTRQHWRKRS. A helical; Signal-anchor for type II membrane protein transmembrane segment spans residues 66–86; sequence YIYLAVCLFFLASVLSCAIIF. Residues 87–853 lie on the Lumenal side of the membrane; it reads RFYLHTNREN…SGHFHHALYC (767 aa). 5 N-linked (GlcNAc...) asparagine glycosylation sites follow: N96, N102, N472, N483, and N613. Active-site charge relay system residues include S719, D795, and H828.

Belongs to the peptidase S9B family.

Its subcellular location is the vacuole membrane. The polypeptide is Putative dipeptidyl aminopeptidase C14C4.15c (Schizosaccharomyces pombe (strain 972 / ATCC 24843) (Fission yeast)).